The sequence spans 48 residues: ATP synthase protein 8 (48 aa).

Residues 13–35 form a helical membrane-spanning segment; sequence LTYGFTFILTILFLTSYVFLPMI.

Belongs to the ATPase protein 8 family. In terms of assembly, F-type ATPases have 2 components, CF(1) - the catalytic core - and CF(0) - the membrane proton channel. In yeast, the dimeric form of ATP synthase consists of 18 polypeptides: alpha, beta, gamma, delta, epsilon, 4 (B), 5 (OSCP), 6 (A), 8, 9 (C), d, E (Tim11), f, g, h, i, j and k.

The protein resides in the mitochondrion membrane. Its function is as follows. Mitochondrial membrane ATP synthase (F(1)F(0) ATP synthase or Complex V) produces ATP from ADP in the presence of a proton gradient across the membrane which is generated by electron transport complexes of the respiratory chain. F-type ATPases consist of two structural domains, F(1) - containing the extramembraneous catalytic core and F(0) - containing the membrane proton channel, linked together by a central stalk and a peripheral stalk. During catalysis, ATP synthesis in the catalytic domain of F(1) is coupled via a rotary mechanism of the central stalk subunits to proton translocation. Part of the complex F(0) domain. Minor subunit located with subunit a in the membrane. This Eremothecium gossypii (strain ATCC 10895 / CBS 109.51 / FGSC 9923 / NRRL Y-1056) (Yeast) protein is ATP synthase protein 8 (ATP8).